Reading from the N-terminus, the 334-residue chain is snRNA-activating protein complex subunit 2 (334 aa).

2 disordered regions span residues 137-200 (LHSK…STEE) and 271-306 (AGGS…ELKS). The segment covering 167–180 (IPSSAPAAPSSAPR) has biased composition (low complexity).

As to quaternary structure, part of the SNAPc complex composed of 5 subunits: SNAPC1, SNAPC2, SNAPC3, SNAPC4 and SNAPC5. SNAPC2 interacts with TBP and SNAPC4.

Its subcellular location is the nucleus. Part of the SNAPc complex required for the transcription of both RNA polymerase II and III small-nuclear RNA genes. Binds to the proximal sequence element (PSE), a non-TATA-box basal promoter element common to these 2 types of genes. Recruits TBP and BRF2 to the U6 snRNA TATA box. This Homo sapiens (Human) protein is snRNA-activating protein complex subunit 2 (SNAPC2).